We begin with the raw amino-acid sequence, 406 residues long: Kelch domain-containing protein 1 (406 aa).

6 Kelch repeats span residues 24–76, 80–134, 135–181, 208–258, 260–307, and 311–361; these read FLYV…CGAC, RLYV…VYKD, RLIY…TKTR, KGYV…AITD, KLFL…ACLG, and EIMV…LKSQ.

As to quaternary structure, component of a CRL5 E3 ubiquitin-protein ligase complex, also named ECS (Elongin BC-CUL2/5-SOCS-box protein) complex, composed of CUL5, Elongin BC (ELOB and ELOC), RBX1 and substrate-specific adapter KLHDC1.

It is found in the cytoplasm. The protein resides in the cytosol. It participates in protein modification; protein ubiquitination. Substrate-recognition component of a Cul5-RING (CRL5) E3 ubiquitin-protein ligase complex of the DesCEND (destruction via C-end degrons) pathway, which recognizes a C-degron located at the extreme C terminus of target proteins, leading to their ubiquitination and degradation. The C-degron recognized by the DesCEND pathway is usually a motif of less than ten residues and can be present in full-length proteins, truncated proteins or proteolytically cleaved forms. The CRL5(KLHDC1) complex mediates ubiquitination and degradation of truncated SELENOS selenoprotein produced by failed UGA/Sec decoding, which ends with a glycine. The chain is Kelch domain-containing protein 1 from Mus musculus (Mouse).